Here is a 302-residue protein sequence, read N- to C-terminus: Late embryogenesis abundant protein D-29 (302 aa).

Disordered stretches follow at residues 25–93 (HMPS…AKEY), 168–193 (VKNA…LADS), and 205–302 (AKEK…NHKN). Basic and acidic residues-rich tracts occupy residues 34-70 (RDYS…HAAN) and 79-93 (AKDR…AKEY). The span at 205-286 (AKEKVRDMAD…KAEETIESAK (82 aa)) shows a compositional bias: basic and acidic residues.

The protein belongs to the LEA type 1 family.

LEA protein are late embryonic proteins abundant in higher plant seed embryos. There are two subsets of LEA proteins (5a and 5b), the first ones are expressed when the cotyledon weight reach 80 mg and the second set are expressed above 100 mg. The function of those proteins is not known. The protein is Late embryogenesis abundant protein D-29 of Gossypium hirsutum (Upland cotton).